Consider the following 286-residue polypeptide: Serine carboxypeptidase-like (286 aa).

Ser4 is an active-site residue. 2 cysteine pairs are disulfide-bonded: Cys83/Cys98 and Cys121/Cys126. Asp193 is an active-site residue. Cys196 lines the substrate pocket. Residue Asn227 is glycosylated (N-linked (GlcNAc...) asparagine). His250 is an active-site residue.

It belongs to the peptidase S10 family.

Its function is as follows. Involved in degradation of small peptides. This is Serine carboxypeptidase-like from Pisum sativum (Garden pea).